Consider the following 839-residue polypeptide: Translation initiation factor IF-2 (839 aa).

2 stretches are compositionally biased toward basic and acidic residues: residues 1-12 and 57-67; these read MSDNEIKNETPK and AEAKAQEKQAA. 2 disordered regions span residues 1 to 21 and 57 to 244; these read MSDN…RRTK and AEAK…GASL. The span at 68-90 shows a compositional bias: low complexity; that stretch reads EKAAQAQTEAKAQTEQACTTKKT. 3 stretches are compositionally biased toward basic and acidic residues: residues 104–167, 185–199, and 212–233; these read PKTE…REET, READ…EGNR, and GGRE…DIKG. The region spanning 338–508 is the tr-type G domain; it reads TRAPVVTIMG…ILQSEVLELT (171 aa). The segment at 347 to 354 is G1; that stretch reads GHVDHGKT. 347-354 is a GTP binding site; that stretch reads GHVDHGKT. The tract at residues 372–376 is G2; that stretch reads GITQH. Positions 394 to 397 are G3; the sequence is DTPG. Residues 394–398 and 448–451 each bind GTP; these read DTPGH and NKID. Residues 448–451 are G4; the sequence is NKID. The G5 stretch occupies residues 484 to 486; it reads SAK.

Belongs to the TRAFAC class translation factor GTPase superfamily. Classic translation factor GTPase family. IF-2 subfamily.

It localises to the cytoplasm. In terms of biological role, one of the essential components for the initiation of protein synthesis. Protects formylmethionyl-tRNA from spontaneous hydrolysis and promotes its binding to the 30S ribosomal subunits. Also involved in the hydrolysis of GTP during the formation of the 70S ribosomal complex. The chain is Translation initiation factor IF-2 from Haemophilus ducreyi (strain 35000HP / ATCC 700724).